Here is a 473-residue protein sequence, read N- to C-terminus: Photosystem II CP43 reaction center protein (473 aa).

Residues 1–14 (MKTLYSPRRFYPVE) constitute a propeptide that is removed on maturation. Residue Thr-15 is modified to N-acetylthreonine. A Phosphothreonine modification is found at Thr-15. The next 5 membrane-spanning stretches (helical) occupy residues 69 to 93 (LFEV…PHLA), 134 to 155 (LIGP…KDRN), 178 to 200 (KALF…RKIT), 255 to 275 (KPFA…LSYS), and 291 to 312 (WFNN…ASQA). A [CaMn4O5] cluster-binding site is contributed by Glu-367. The chain crosses the membrane as a helical span at residues 447–471 (RARAAAAGFEKGIDRDLEPVLFMTP).

Belongs to the PsbB/PsbC family. PsbC subfamily. PSII is composed of 1 copy each of membrane proteins PsbA, PsbB, PsbC, PsbD, PsbE, PsbF, PsbH, PsbI, PsbJ, PsbK, PsbL, PsbM, PsbT, PsbX, PsbY, PsbZ, Psb30/Ycf12, at least 3 peripheral proteins of the oxygen-evolving complex and a large number of cofactors. It forms dimeric complexes. Binds multiple chlorophylls and provides some of the ligands for the Ca-4Mn-5O cluster of the oxygen-evolving complex. It may also provide a ligand for a Cl- that is required for oxygen evolution. PSII binds additional chlorophylls, carotenoids and specific lipids. is required as a cofactor.

It is found in the plastid. The protein localises to the chloroplast thylakoid membrane. Its function is as follows. One of the components of the core complex of photosystem II (PSII). It binds chlorophyll and helps catalyze the primary light-induced photochemical processes of PSII. PSII is a light-driven water:plastoquinone oxidoreductase, using light energy to abstract electrons from H(2)O, generating O(2) and a proton gradient subsequently used for ATP formation. This chain is Photosystem II CP43 reaction center protein, found in Welwitschia mirabilis (Tree tumbo).